The sequence spans 355 residues: UDP-N-acetylglucosamine--N-acetylmuramyl-(pentapeptide) pyrophosphoryl-undecaprenol N-acetylglucosamine transferase (355 aa).

UDP-N-acetyl-alpha-D-glucosamine is bound by residues 14 to 16, Asn-126, Arg-162, Ser-190, Ile-243, 262 to 267, and Gln-288; these read SGG and ALTVSE.

This sequence belongs to the glycosyltransferase 28 family. MurG subfamily.

It is found in the cell inner membrane. It catalyses the reaction di-trans,octa-cis-undecaprenyl diphospho-N-acetyl-alpha-D-muramoyl-L-alanyl-D-glutamyl-meso-2,6-diaminopimeloyl-D-alanyl-D-alanine + UDP-N-acetyl-alpha-D-glucosamine = di-trans,octa-cis-undecaprenyl diphospho-[N-acetyl-alpha-D-glucosaminyl-(1-&gt;4)]-N-acetyl-alpha-D-muramoyl-L-alanyl-D-glutamyl-meso-2,6-diaminopimeloyl-D-alanyl-D-alanine + UDP + H(+). It functions in the pathway cell wall biogenesis; peptidoglycan biosynthesis. In terms of biological role, cell wall formation. Catalyzes the transfer of a GlcNAc subunit on undecaprenyl-pyrophosphoryl-MurNAc-pentapeptide (lipid intermediate I) to form undecaprenyl-pyrophosphoryl-MurNAc-(pentapeptide)GlcNAc (lipid intermediate II). This is UDP-N-acetylglucosamine--N-acetylmuramyl-(pentapeptide) pyrophosphoryl-undecaprenol N-acetylglucosamine transferase from Blochmanniella pennsylvanica (strain BPEN).